A 67-amino-acid polypeptide reads, in one-letter code: Alpha-toxin Cn12 (67 aa).

The LCN-type CS-alpha/beta domain maps to 1–66; sequence RDGYPLASNG…WGDSGTGPCR (66 aa). 4 cysteine pairs are disulfide-bonded: Cys-11/Cys-65, Cys-15/Cys-40, Cys-25/Cys-45, and Cys-29/Cys-47.

As to expression, expressed by the venom gland.

It is found in the secreted. In terms of biological role, alpha toxins bind voltage-independently at site-3 of sodium channels (Nav) and inhibit the inactivation of the activated channels, thereby blocking neuronal transmission. This toxin binds, in vitro, to sodium channels and inhibits the inactivation of the activated channels. Seems not toxic to mice, crickets and sweet-water shrimps. In Centruroides noxius (Mexican scorpion), this protein is Alpha-toxin Cn12.